Consider the following 140-residue polypeptide: Small ribosomal subunit protein uS12 (140 aa).

At aspartate 102 the chain carries 3-methylthioaspartic acid.

Belongs to the universal ribosomal protein uS12 family. In terms of assembly, part of the 30S ribosomal subunit. Contacts proteins S8 and S17. May interact with IF1 in the 30S initiation complex.

Functionally, with S4 and S5 plays an important role in translational accuracy. Interacts with and stabilizes bases of the 16S rRNA that are involved in tRNA selection in the A site and with the mRNA backbone. Located at the interface of the 30S and 50S subunits, it traverses the body of the 30S subunit contacting proteins on the other side and probably holding the rRNA structure together. The combined cluster of proteins S8, S12 and S17 appears to hold together the shoulder and platform of the 30S subunit. This is Small ribosomal subunit protein uS12 from Bacillus cereus (strain G9842).